Consider the following 843-residue polypeptide: Taste receptor type 1 member 2 (843 aa).

The signal sequence occupies residues 1–19 (MGPQARTLCLLSLLLHVLP). At 20–570 (KPGKLVENSD…TFLEWHEVPT (551 aa)) the chain is on the extracellular side. N-linked (GlcNAc...) asparagine glycosylation is found at N87, N296, N316, N355, N372, N432, N484, N491, and N531. Residues 571-591 (IVVAILAALGFFSTLAILFIF) form a helical membrane-spanning segment. Topologically, residues 592–606 (WRHFQTPMVRSAGGP) are cytoplasmic. The helical transmembrane segment at 607–627 (MCFLMLVPLLLAFGMVPVYVG) threads the bilayer. Residues 628–642 (PPTVFSCFCRQAFFT) are Extracellular-facing. The helical transmembrane segment at 643–663 (VCFSICLSCITVRSFQIVCVF) threads the bilayer. Residues 664-682 (KMARRLPSAYSFWMRYHGP) lie on the Cytoplasmic side of the membrane. Residues 683–703 (YVFVAFITAIKVALVVGNMLA) form a helical membrane-spanning segment. Residues 704–731 (TTINPIGRTDPDDPNIMILSCHPNYRNG) lie on the Extracellular side of the membrane. A helical membrane pass occupies residues 732–752 (LLFNTSMDLLLSVLGFSFAYM). Over 753–764 (GKELPTNYNEAK) the chain is Cytoplasmic. A helical membrane pass occupies residues 765 to 785 (FITLSMTFSFTSSISLCTFMS). Topologically, residues 786-789 (VHDG) are extracellular. The chain crosses the membrane as a helical span at residues 790–810 (VLVTIMDLLVTVLNFLAIGLG). Topologically, residues 811–843 (YFGPKCYMILFYPERNTSAYFNSMIQGYTMRKS) are cytoplasmic.

The protein belongs to the G-protein coupled receptor 3 family. TAS1R subfamily. As to quaternary structure, forms heterodimers with TAS1R3. As to expression, abundantly expressed in circumvallate and foliate papillae.

It localises to the cell membrane. Functionally, putative taste receptor. TAS1R2/TAS1R3 recognizes diverse natural and synthetic sweeteners. This is Taste receptor type 1 member 2 (Tas1r2) from Rattus norvegicus (Rat).